Consider the following 415-residue polypeptide: Gamma-glutamyl phosphate reductase (415 aa).

It belongs to the gamma-glutamyl phosphate reductase family.

Its subcellular location is the cytoplasm. It carries out the reaction L-glutamate 5-semialdehyde + phosphate + NADP(+) = L-glutamyl 5-phosphate + NADPH + H(+). It participates in amino-acid biosynthesis; L-proline biosynthesis; L-glutamate 5-semialdehyde from L-glutamate: step 2/2. Functionally, catalyzes the NADPH-dependent reduction of L-glutamate 5-phosphate into L-glutamate 5-semialdehyde and phosphate. The product spontaneously undergoes cyclization to form 1-pyrroline-5-carboxylate. This chain is Gamma-glutamyl phosphate reductase, found in Clostridium perfringens (strain ATCC 13124 / DSM 756 / JCM 1290 / NCIMB 6125 / NCTC 8237 / Type A).